Reading from the N-terminus, the 387-residue chain is MNPDNPLLALRDKISAVDKKLLTLLAERRLLAVEVAQAKLATHRPIRDVERERALLENLIVLGKAHNLDAHYITRLFQLVIEDSVLTQQALLQKNLNHPHAHAARIAFLGPKGSYSHLAARNYASRHFDSMVECGCLKFHDIIKQVENGVADYAVMPIENTSSGSINDVYDLLQQTSLSIVGELTLPIDHCVLVNGPTDLQQIETVYSHPQPFQQCSQFINRFPHWKIEYTESTAAAMEKVAALNSPKVAALGSEAGGELYQLQVLERNLANQQQNHTRFIVLARKAIEVSDQVPAKTTLIMATGQQAGALVDALLVLRQHNLIMSKLESRPINGNPWEEMFYIDVQGNLQSERMQQALQELQTMTRSLKVLGCYPSENVVPAEPGR.

Residues 1–92 form the Chorismate mutase domain; sequence MNPDNPLLAL…DSVLTQQALL (92 aa). Substrate-binding residues include Arg11, Arg28, Lys39, Asp48, Glu52, Ser84, and Gln88. The region spanning 105–285 is the Prephenate dehydratase domain; the sequence is RIAFLGPKGS…NHTRFIVLAR (181 aa). The region spanning 299-376 is the ACT domain; sequence TLIMATGQQA…RSLKVLGCYP (78 aa).

Its subcellular location is the cytoplasm. It carries out the reaction chorismate = prephenate. It catalyses the reaction prephenate + H(+) = 3-phenylpyruvate + CO2 + H2O. Its pathway is amino-acid biosynthesis; L-phenylalanine biosynthesis; phenylpyruvate from prephenate: step 1/1. It functions in the pathway metabolic intermediate biosynthesis; prephenate biosynthesis; prephenate from chorismate: step 1/1. In terms of biological role, catalyzes the Claisen rearrangement of chorismate to prephenate and the decarboxylation/dehydration of prephenate to phenylpyruvate. The polypeptide is Bifunctional chorismate mutase/prephenate dehydratase (pheA) (Enterobacter agglomerans (Erwinia herbicola)).